The chain runs to 1240 residues: Serine/threonine-protein kinase TAO2 (1240 aa).

S9 bears the Phosphoserine mark. The Protein kinase domain occupies F28–V281. ATP contacts are provided by residues I34–V42 and K57. D151 serves as the catalytic Proton acceptor. S181 is modified (phosphoserine). Residues A320–R463 form a disordered region. Over residues S356–A380 the composition is skewed to low complexity. Residues S381–G401 show a composition bias toward acidic residues. Positions P402–V417 are enriched in basic and acidic residues. At S422 the chain carries Phosphoserine. 2 coiled-coil regions span residues S493–S528 and K581–N608. A Phosphoserine modification is found at S663. Residues L688–E720 are a coiled coil. Phosphoserine is present on residues S782, S830, and S832. Residues R805–P934 are a coiled coil. Positions V899–P946 are disordered. A compositionally biased stretch (acidic residues) spans P904–G914. Over residues P931–S940 the composition is skewed to pro residues. A run of 5 helical transmembrane segments spans residues L972–L992, A994–C1014, L1019–L1039, L1045–L1065, and L1175–G1195. L999 carries the omega-N-methylarginine modification. L1037 is modified (phosphoserine). The disordered stretch occupies residues L1212–R1240.

It belongs to the protein kinase superfamily. STE Ser/Thr protein kinase family. STE20 subfamily. In terms of assembly, interacts with MAP2K3 and MAP2K6. Self-associates. Interacts with tubulins. Interacts with MAP3K7 and interferes with MAP3K7-binding to CHUK and thus prevents NF-kappa-B activation. Isoform 2 interacts with PCDH8; this complex may also include CDH2. Mg(2+) is required as a cofactor. In terms of processing, autophosphorylated. Phosphorylated by ATM. Phosphorylated on Ser-1037 by MAPK14. This phosphorylation is required PCDH8 for endocytosis.

It localises to the cytoplasmic vesicle membrane. Its subcellular location is the cytoplasm. The protein localises to the cytoskeleton. The protein resides in the cell projection. It is found in the dendrite. The catalysed reaction is L-seryl-[protein] + ATP = O-phospho-L-seryl-[protein] + ADP + H(+). It carries out the reaction L-threonyl-[protein] + ATP = O-phospho-L-threonyl-[protein] + ADP + H(+). Functionally, serine/threonine-protein kinase involved in different processes such as membrane blebbing and apoptotic bodies formation DNA damage response and MAPK14/p38 MAPK stress-activated MAPK cascade. Phosphorylates itself, MBP, activated MAPK8, MAP2K3, MAP2K6 and tubulins. Activates the MAPK14/p38 MAPK signaling pathway through the specific activation and phosphorylation of the upstream MAP2K3 and MAP2K6 kinases. In response to DNA damage, involved in the G2/M transition DNA damage checkpoint by activating the p38/MAPK14 stress-activated MAPK cascade, probably by mediating phosphorylation of upstream MAP2K3 and MAP2K6 kinases. May affect microtubule organization and stability. May play a role in the osmotic stress-MAPK8 pathway. Prevents MAP3K7-mediated activation of CHUK, and thus NF-kappa-B activation. Isoform 2, but not isoform 1, is required for PCDH8 endocytosis. Following homophilic interactions between PCDH8 extracellular domains, isoform 2 phosphorylates and activates MAPK14/p38 MAPK which in turn phosphorylates isoform 2. This process leads to PCDH8 endocytosis and CDH2 cointernalization. Both isoforms are involved in MAPK14/p38 MAPK activation. This is Serine/threonine-protein kinase TAO2 (Taok2) from Mus musculus (Mouse).